Consider the following 239-residue polypeptide: Pyridoxine 5'-phosphate synthase (239 aa).

Asn7 is a binding site for 3-amino-2-oxopropyl phosphate. Asp9 to His10 contributes to the 1-deoxy-D-xylulose 5-phosphate binding site. Arg18 contacts 3-amino-2-oxopropyl phosphate. The active-site Proton acceptor is the His43. Residues Arg45 and His50 each contribute to the 1-deoxy-D-xylulose 5-phosphate site. The Proton acceptor role is filled by Glu70. Thr100 provides a ligand contact to 1-deoxy-D-xylulose 5-phosphate. The active-site Proton donor is His191. Residues Gly192 and Gly213–His214 contribute to the 3-amino-2-oxopropyl phosphate site.

Belongs to the PNP synthase family. In terms of assembly, homooctamer; tetramer of dimers.

The protein resides in the cytoplasm. The catalysed reaction is 3-amino-2-oxopropyl phosphate + 1-deoxy-D-xylulose 5-phosphate = pyridoxine 5'-phosphate + phosphate + 2 H2O + H(+). The protein operates within cofactor biosynthesis; pyridoxine 5'-phosphate biosynthesis; pyridoxine 5'-phosphate from D-erythrose 4-phosphate: step 5/5. Its function is as follows. Catalyzes the complicated ring closure reaction between the two acyclic compounds 1-deoxy-D-xylulose-5-phosphate (DXP) and 3-amino-2-oxopropyl phosphate (1-amino-acetone-3-phosphate or AAP) to form pyridoxine 5'-phosphate (PNP) and inorganic phosphate. This Geobacter sulfurreducens (strain ATCC 51573 / DSM 12127 / PCA) protein is Pyridoxine 5'-phosphate synthase.